The primary structure comprises 686 residues: Aminodeoxychorismate synthase (686 aa).

The Glutamine amidotransferase type-1 domain maps to 2 to 194 (RTLLIDNYDS…RDLALAHHRA (193 aa)). Cys-81 acts as the Nucleophile in catalysis. Catalysis depends on residues His-168 and Glu-170. The interval 233–686 (LDSSSVLEGA…LDGSAVAGAR (454 aa)) is PABB component.

The protein in the C-terminal section; belongs to the anthranilate synthase component I family.

The catalysed reaction is chorismate + L-glutamine = 4-amino-4-deoxychorismate + L-glutamate. It functions in the pathway antibiotic biosynthesis. Involved in chloramphenicol biosynthesis. Catalyzes the biosynthesis of 4-amino-4-deoxychorismate (ADC) from chorismate and glutamine. This chain is Aminodeoxychorismate synthase, found in Streptomyces venezuelae (strain ATCC 10712 / CBS 650.69 / DSM 40230 / JCM 4526 / NBRC 13096 / PD 04745).